A 299-amino-acid chain; its full sequence is MTNYIEHKPVMAKQVAELLVSNEEGIYVDATAGSGGHLGLLANTYPEASFIGIDIDPEAVKFLTEKFAGVSNVRIIRGNYADLPDILHSMEIGQVDGILLDLGISMHQALSAQRGFSIKNPGPLDMRFSIDQKVTAYELVNSLSEEQLADIIYRYGEERRARKIAKAVVEARKVKPLETTDELADLVARTVGYRGRIHPATRVFQALRIATNRELDNLQVALPRIFQVLKEGGRLAVISYHSLEDRIVKQFFKTWEEEGKGLRLTKKVVKPSLEEINENPSSRSAKLRVFKKGVGGNEN.

S-adenosyl-L-methionine-binding positions include 35–37 (GGH), Asp-54, Tyr-80, Asp-101, and Gln-108.

This sequence belongs to the methyltransferase superfamily. RsmH family.

It is found in the cytoplasm. It carries out the reaction cytidine(1402) in 16S rRNA + S-adenosyl-L-methionine = N(4)-methylcytidine(1402) in 16S rRNA + S-adenosyl-L-homocysteine + H(+). Specifically methylates the N4 position of cytidine in position 1402 (C1402) of 16S rRNA. The chain is Ribosomal RNA small subunit methyltransferase H from Coprothermobacter proteolyticus (strain ATCC 35245 / DSM 5265 / OCM 4 / BT).